A 513-amino-acid chain; its full sequence is Histone acetyltransferase KAT5 (513 aa).

The Tudor-knot domain maps to 8-65 (IEGCRLPVLRRNQDNEDEWPLAEILSVKDISGRKLFYVHYIDFNKRLDEWVTHERLDL). Lys52 bears the N6-acetyllysine mark. Residues 69–106 (QFPKKEAKTPTKNGLPGSRPGSPEREVPASAQASGKTL) form a disordered region. Ser86 bears the Phosphoserine mark. The residue at position 90 (Ser90) is a Phosphoserine; by CDK1 and CDK9. N6-acetyllysine; by autocatalysis occurs at positions 104 and 120. The segment at 122 to 217 (REAIPGGEPD…SAPRMTGSLV (96 aa)) is disordered. Over residues 133-144 (PLSSSSCLQPNH) the composition is skewed to polar residues. An N6-acetyllysine; by autocatalysis mark is found at Lys148, Lys150, Lys187, and Lys189. At Ser199 the chain carries Phosphoserine. One can recognise an MYST-type HAT domain in the interval 227–504 (TRMKNIECIE…IDSKCLHFTP (278 aa)). The C2HC MYST-type zinc finger occupies 260–285 (LYLCEFCLKYGRSLKCLQRHLTKCDL). At Lys327 the chain carries N6-acetyllysine; by autocatalysis. Residues 368 to 513 (ACILTLPPYQ…PKDWSKRGKW (146 aa)) are interaction with ATF2. Acetyl-CoA is bound by residues 370–372 (ILT) and 377–383 (QRRGYGK). Glu403 serves as the catalytic Proton donor/acceptor. The acetyl-CoA site is built by Ser407 and Ser416. Residue Lys430 forms a Glycyl lysine isopeptide (Lys-Gly) (interchain with G-Cter in SUMO1); alternate linkage. A Glycyl lysine isopeptide (Lys-Gly) (interchain with G-Cter in SUMO2); alternate cross-link involves residue Lys430. Lys451 participates in a covalent cross-link: Glycyl lysine isopeptide (Lys-Gly) (interchain with G-Cter in SUMO1).

The protein belongs to the MYST (SAS/MOZ) family. As to quaternary structure, component of the NuA4 histone acetyltransferase complex which contains the catalytic subunit KAT5/TIP60 and the subunits EP400, TRRAP/PAF400, BRD8/SMAP, EPC1, DMAP1/DNMAP1, RUVBL1/TIP49, RUVBL2, ING3, actin, ACTL6A/BAF53A, MORF4L1/MRG15, MORF4L2/MRGX, MRGBP, YEATS4/GAS41, VPS72/YL1 and MEAF6. KAT5/TIP60, EPC1, and ING3 together constitute a minimal HAT complex termed Piccolo NuA4. The NuA4 complex interacts with MYC. Interacts with ATM. Interacts with JADE1. Interacts with PLA2G4A/CPLA2, EDNRA and HDAC7. Interacts with the cytoplasmic tail of APP and APBB1/FE65. Interacts with TRIM24 and TRIM68. Forms a complex with SENP6 and UBE2I in response to UV irradiation. Identified in a complex with HINT1. Interacts with ATF2 and CUL3. Interacts with NR1D2 (via N-terminus). Component of a SWR1-like complex. Interacts with FOXP3. Interacts with ZBTB49. Interacts with SRF. Interacts with ATF3; promoting autoacetylation and deubiquitination by USP7. Interacts with EP300/p300; interaction promotes KAT5 autoacetylation. Interacts with PRKDC; interaction is impaired following KAT5 sumoylation. Interacts with GPR50. Interacts with NME3; this interaction enables recruitment of NME3 at DNA damage sites where it plays a role in the repair of DNA. Post-translationally, phosphorylated on Ser-86 and Ser-90; enhanced during G2/M phase. The phosphorylated form has a higher activity. Phosphorylation at Ser-90 by CDK1 or CDK9 is a prerequisite for phosphorylation at Ser-86 by GSK3. Phosphorylation at Ser-86 by GSK3 (GSK3A or GSK3B) activates acetyltransferase and acyltransferase activity. Phosphorylation at Ser-90 by CDK9 promotes KAT5 recruitment to chromatin. Phosphorylation by VRK1 following DNA damage promotes KAT5 association with chromatin and histone acetyltransferase activity. In terms of processing, autoacetylated. Autoacetylation is required for histone acetyltransferase activity. Autoacetylation at Lys-327 is facilitated by interaction with EP300/p300: it prevents ubiquitination and subsequent degradation by the proteasome and promotes acetylation of target proteins. Deacetylated by HDAC3 and SIRT1. Deacetylation by HDAC3 promotes its ubiquitination and cytoplasmic localization. Sumoylated by UBE2I at Lys-430 and Lys-451, leading to increase of its histone acetyltransferase activity in UV-induced DNA damage response, as well as its translocation to nuclear bodies. Sumoylation with SUMO2 by PIAS4 at Lys-430 promotes repair of DNA double-strand breaks (DSBs) via homologous recombination (HR). Sumoylation by PIAS4 impairs interaction with PRKDC, inhibiting non-homologous end joining (NHEJ)-mediated repair of DSBs, thereby facilitating HR. Desumoylated by SENP3. Post-translationally, ubiquitinated by MDM2, leading to its proteasome-dependent degradation. Ubiquitination is prevented by autoacetylation at Lys-327. Ubiquitinated following deacetylation by HDAC3, leading to cytoplasmic localization. Deubiquitinated by USP7 following interaction with ATF3, promoting its stabilization. As to expression, expressed in testis, heart, brain, kidney and liver. Weakly expressed in lung.

The protein localises to the nucleus. It localises to the chromosome. The protein resides in the cytoplasm. It is found in the centromere. Its subcellular location is the kinetochore. The protein localises to the cytoskeleton. It localises to the spindle pole. The protein resides in the nucleolus. It is found in the perinuclear region. The enzyme catalyses L-lysyl-[histone] + acetyl-CoA = N(6)-acetyl-L-lysyl-[histone] + CoA + H(+). The catalysed reaction is L-lysyl-[protein] + acetyl-CoA = N(6)-acetyl-L-lysyl-[protein] + CoA + H(+). It catalyses the reaction (2E)-butenoyl-CoA + L-lysyl-[protein] = N(6)-(2E)-butenoyl-L-lysyl-[protein] + CoA + H(+). It carries out the reaction 2-hydroxyisobutanoyl-CoA + L-lysyl-[protein] = N(6)-(2-hydroxyisobutanoyl)-L-lysyl-[protein] + CoA + H(+). The enzyme catalyses (S)-lactoyl-CoA + L-lysyl-[protein] = N(6)-[(S)-lactoyl]-L-lysyl-[protein] + CoA + H(+). With respect to regulation, acyltransferase and acetyltransferase activities are activated by phosphorylation and autoacetylation. Autoacetylation activates the histone acetyltransferase activity. In terms of biological role, catalytic subunit of the NuA4 histone acetyltransferase complex, a multiprotein complex involved in transcriptional activation of select genes principally by acetylation of nucleosomal histones H2A and H4. Histone acetylation alters nucleosome-DNA interactions and promotes interaction of the modified histones with other proteins which positively regulate transcription. The NuA4 histone acetyltransferase complex is required for the activation of transcriptional programs associated with proto-oncogene mediated growth induction, tumor suppressor mediated growth arrest and replicative senescence, apoptosis, and DNA repair. The NuA4 complex plays a direct role in repair of DNA double-strand breaks (DSBs) by promoting homologous recombination (HR): the complex inhibits TP53BP1 binding to chromatin via MBTD1, which recognizes and binds histone H4 trimethylated at 'Lys-20' (H4K20me), and KAT5 that catalyzes acetylation of 'Lys-15' of histone H2A (H2AK15ac), thereby blocking the ubiquitination mark required for TP53BP1 localization at DNA breaks. Also involved in DSB repair by mediating acetylation of 'Lys-5' of histone H2AX (H2AXK5ac), promoting NBN/NBS1 assembly at the sites of DNA damage. The NuA4 complex plays a key role in hematopoietic stem cell maintenance and is required to maintain acetylated H2A.Z/H2AZ1 at MYC target genes. The NuA4 complex is also required for spermatid development by promoting acetylation of histones: histone hyperacetylation is required for histone replacement during the transition from round to elongating spermatids. Component of a SWR1-like complex that specifically mediates the removal of histone H2A.Z/H2AZ1 from the nucleosome. Also acetylates non-histone proteins, such as BMAL1, ATM, AURKB, CHKA, CGAS, ERCC4/XPF, LPIN1, TP53/p53, NDC80/HEC1, NR1D2, RAN, SOX4, FOXP3, SQSTM1, ULK1 and RUBCNL/Pacer. Directly acetylates and activates ATM. Promotes nucleotide excision repair (NER) by mediating acetylation of ERCC4/XPF, thereby promoting formation of the ERCC4-ERCC1 complex. Relieves NR1D2-mediated inhibition of APOC3 expression by acetylating NR1D2. Acts as a regulator of regulatory T-cells (Treg) by catalyzing FOXP3 acetylation, thereby promoting FOXP3 transcriptional repressor activity. Involved in skeletal myoblast differentiation by mediating acetylation of SOX4. Catalyzes acetylation of APBB1/FE65, increasing its transcription activator activity. Promotes transcription elongation during the activation phase of the circadian cycle by catalyzing acetylation of BMAL1, promoting elongation of circadian transcripts. Together with GSK3 (GSK3A or GSK3B), acts as a regulator of autophagy: phosphorylated at Ser-86 by GSK3 under starvation conditions, leading to activate acetyltransferase activity and promote acetylation of key autophagy regulators, such as ULK1 and RUBCNL/Pacer. Acts as a regulator of the cGAS-STING innate antiviral response by catalyzing acetylation the N-terminus of CGAS, thereby promoting CGAS DNA-binding and activation. Also regulates lipid metabolism by mediating acetylation of CHKA or LPIN1. Promotes lipolysis of lipid droplets following glucose deprivation by mediating acetylation of isoform 1 of CHKA, thereby promoting monomerization of CHKA and its conversion into a tyrosine-protein kinase. Acts as a regulator of fatty-acid-induced triacylglycerol synthesis by catalyzing acetylation of LPIN1, thereby promoting the synthesis of diacylglycerol. In addition to protein acetyltransferase, can use different acyl-CoA substrates, such as (2E)-butenoyl-CoA (crotonyl-CoA), S-lactoyl-CoA (lactyl-CoA) and 2-hydroxyisobutanoyl-CoA (2-hydroxyisobutyryl-CoA), and is able to mediate protein crotonylation, lactylation and 2-hydroxyisobutyrylation, respectively. Acts as a key regulator of chromosome segregation and kinetochore-microtubule attachment during mitosis by mediating acetylation or crotonylation of target proteins. Catalyzes acetylation of AURKB at kinetochores, increasing AURKB activity and promoting accurate chromosome segregation in mitosis. Acetylates RAN during mitosis, promoting microtubule assembly at mitotic chromosomes. Acetylates NDC80/HEC1 during mitosis, promoting robust kinetochore-microtubule attachment. Catalyzes crotonylation of MAPRE1/EB1, thereby ensuring accurate spindle positioning in mitosis. Catalyzes lactylation of NBN/NBS1 in response to DNA damage, thereby promoting DNA double-strand breaks (DSBs) via homologous recombination (HR). The sequence is that of Histone acetyltransferase KAT5 from Mus musculus (Mouse).